A 138-amino-acid chain; its full sequence is Ribosome-binding factor A (138 aa).

Over residues 1 to 20 (MSSRPPSSSGPAGIPKGAPS) the composition is skewed to low complexity. Positions 1-21 (MSSRPPSSSGPAGIPKGAPSQ) are disordered.

Belongs to the RbfA family. As to quaternary structure, monomer. Binds 30S ribosomal subunits, but not 50S ribosomal subunits or 70S ribosomes.

The protein localises to the cytoplasm. Its function is as follows. One of several proteins that assist in the late maturation steps of the functional core of the 30S ribosomal subunit. Associates with free 30S ribosomal subunits (but not with 30S subunits that are part of 70S ribosomes or polysomes). Required for efficient processing of 16S rRNA. May interact with the 5'-terminal helix region of 16S rRNA. The sequence is that of Ribosome-binding factor A from Granulibacter bethesdensis (strain ATCC BAA-1260 / CGDNIH1).